Here is a 341-residue protein sequence, read N- to C-terminus: Malate dehydrogenase, mitochondrial (341 aa).

Residues 35–41 and Asp-61 contribute to the NAD(+) site; that span reads GAAGGIG. 2 residues coordinate substrate: Arg-108 and Arg-114. NAD(+)-binding positions include Asn-121 and 144–146; that span reads ITN. Asn-146 and Arg-180 together coordinate substrate. His-204 functions as the Proton acceptor in the catalytic mechanism. Residue Met-255 participates in NAD(+) binding.

This sequence belongs to the LDH/MDH superfamily. MDH type 1 family. As to quaternary structure, homodimer.

It localises to the mitochondrion matrix. It carries out the reaction (S)-malate + NAD(+) = oxaloacetate + NADH + H(+). Catalyzes the reversible conversion of (S)-malate to oxaloacetate in the citric acid cycle. This chain is Malate dehydrogenase, mitochondrial, found in Caenorhabditis elegans.